The following is a 332-amino-acid chain: GTP 3',8-cyclase (332 aa).

Residues 7–221 enclose the Radical SAM core domain; sequence QYERLHDYVR…FDLCKQAGLD (215 aa). GTP is bound at residue arginine 16. [4Fe-4S] cluster-binding residues include cysteine 23 and cysteine 27. Tyrosine 29 contacts S-adenosyl-L-methionine. A [4Fe-4S] cluster-binding site is contributed by cysteine 30. Arginine 66 provides a ligand contact to GTP. Residue glycine 70 coordinates S-adenosyl-L-methionine. Threonine 97 is a binding site for GTP. Serine 121 contributes to the S-adenosyl-L-methionine binding site. Residue lysine 158 participates in GTP binding. Methionine 192 is an S-adenosyl-L-methionine binding site. [4Fe-4S] cluster-binding residues include cysteine 256 and cysteine 259. 261-263 contacts GTP; it reads RLR. A [4Fe-4S] cluster-binding site is contributed by cysteine 273.

It belongs to the radical SAM superfamily. MoaA family. Monomer and homodimer. [4Fe-4S] cluster is required as a cofactor.

It carries out the reaction GTP + AH2 + S-adenosyl-L-methionine = (8S)-3',8-cyclo-7,8-dihydroguanosine 5'-triphosphate + 5'-deoxyadenosine + L-methionine + A + H(+). Its pathway is cofactor biosynthesis; molybdopterin biosynthesis. Its function is as follows. Catalyzes the cyclization of GTP to (8S)-3',8-cyclo-7,8-dihydroguanosine 5'-triphosphate. This chain is GTP 3',8-cyclase, found in Limosilactobacillus fermentum (strain NBRC 3956 / LMG 18251) (Lactobacillus fermentum).